Consider the following 273-residue polypeptide: Dermonecrotic toxin LhSicTox-alphaIA2ai (273 aa).

H5 is an active-site residue. Mg(2+)-binding residues include E25 and D27. H41 serves as the catalytic Nucleophile. 2 disulfide bridges follow: C45–C51 and C47–C190. D85 serves as a coordination point for Mg(2+).

It belongs to the arthropod phospholipase D family. Class II subfamily. Requires Mg(2+) as cofactor. As to expression, expressed by the venom gland.

It localises to the secreted. It catalyses the reaction an N-(acyl)-sphingosylphosphocholine = an N-(acyl)-sphingosyl-1,3-cyclic phosphate + choline. The catalysed reaction is an N-(acyl)-sphingosylphosphoethanolamine = an N-(acyl)-sphingosyl-1,3-cyclic phosphate + ethanolamine. The enzyme catalyses a 1-acyl-sn-glycero-3-phosphocholine = a 1-acyl-sn-glycero-2,3-cyclic phosphate + choline. It carries out the reaction a 1-acyl-sn-glycero-3-phosphoethanolamine = a 1-acyl-sn-glycero-2,3-cyclic phosphate + ethanolamine. Its function is as follows. Dermonecrotic toxins cleave the phosphodiester linkage between the phosphate and headgroup of certain phospholipids (sphingolipid and lysolipid substrates), forming an alcohol (often choline) and a cyclic phosphate. This toxin acts on sphingomyelin (SM). It may also act on ceramide phosphoethanolamine (CPE), lysophosphatidylcholine (LPC) and lysophosphatidylethanolamine (LPE), but not on lysophosphatidylserine (LPS), and lysophosphatidylglycerol (LPG). It acts by transphosphatidylation, releasing exclusively cyclic phosphate products as second products. Induces dermonecrosis, hemolysis, increased vascular permeability, edema, inflammatory response, and platelet aggregation. This chain is Dermonecrotic toxin LhSicTox-alphaIA2ai, found in Loxosceles hirsuta (Recluse spider).